Consider the following 355-residue polypeptide: MIETDKLAAERIIAATPVSPNEEAFERALRPRQLEEYVGQEKVRGQLEIFIEAAKRRSESLDHVLLFGPPGLGKTTLAHIIAREMGVNLRQTSGPVLERAGDLAALLTNLEANDVLFIDEIHRLSPVVEEILYPALEDYQIDIMIGEGPAARSVKLDLQPFTLVGATTRAGMLTNPLRDRFGIVARLEFYNAEQLARIVTRSASLLHAQIHPDGAFEIAKRARGTPRIANRLLRRVRDFAEVKADGNITAQVADAALKMLDVDAVGFDLMDRKLLEAILHKFDGGPVGVDNLAAAIGEERDTIEDVLEPYLIQQGFLQRTPRGRVATLLTYRHFGLAAPDSSSSTLPGLWDSAAT.

Residues 4–190 (TDKLAAERII…FGIVARLEFY (187 aa)) form a large ATPase domain (RuvB-L) region. ATP-binding positions include Leu-29, Arg-30, Gly-71, Lys-74, Thr-75, Thr-76, 137–139 (EDY), Arg-180, Tyr-190, and Arg-227. Residue Thr-75 coordinates Mg(2+). Positions 191-261 (NAEQLARIVT…VADAALKMLD (71 aa)) are small ATPAse domain (RuvB-S). The head domain (RuvB-H) stretch occupies residues 264 to 355 (AVGFDLMDRK…LPGLWDSAAT (92 aa)). Positions 300, 319, and 324 each coordinate DNA.

This sequence belongs to the RuvB family. Homohexamer. Forms an RuvA(8)-RuvB(12)-Holliday junction (HJ) complex. HJ DNA is sandwiched between 2 RuvA tetramers; dsDNA enters through RuvA and exits via RuvB. An RuvB hexamer assembles on each DNA strand where it exits the tetramer. Each RuvB hexamer is contacted by two RuvA subunits (via domain III) on 2 adjacent RuvB subunits; this complex drives branch migration. In the full resolvosome a probable DNA-RuvA(4)-RuvB(12)-RuvC(2) complex forms which resolves the HJ.

It is found in the cytoplasm. It catalyses the reaction ATP + H2O = ADP + phosphate + H(+). The RuvA-RuvB-RuvC complex processes Holliday junction (HJ) DNA during genetic recombination and DNA repair, while the RuvA-RuvB complex plays an important role in the rescue of blocked DNA replication forks via replication fork reversal (RFR). RuvA specifically binds to HJ cruciform DNA, conferring on it an open structure. The RuvB hexamer acts as an ATP-dependent pump, pulling dsDNA into and through the RuvAB complex. RuvB forms 2 homohexamers on either side of HJ DNA bound by 1 or 2 RuvA tetramers; 4 subunits per hexamer contact DNA at a time. Coordinated motions by a converter formed by DNA-disengaged RuvB subunits stimulates ATP hydrolysis and nucleotide exchange. Immobilization of the converter enables RuvB to convert the ATP-contained energy into a lever motion, pulling 2 nucleotides of DNA out of the RuvA tetramer per ATP hydrolyzed, thus driving DNA branch migration. The RuvB motors rotate together with the DNA substrate, which together with the progressing nucleotide cycle form the mechanistic basis for DNA recombination by continuous HJ branch migration. Branch migration allows RuvC to scan DNA until it finds its consensus sequence, where it cleaves and resolves cruciform DNA. The chain is Holliday junction branch migration complex subunit RuvB from Paraburkholderia xenovorans (strain LB400).